Reading from the N-terminus, the 125-residue chain is Ribosome-binding factor A (125 aa).

Belongs to the RbfA family. In terms of assembly, monomer. Binds 30S ribosomal subunits, but not 50S ribosomal subunits or 70S ribosomes.

It localises to the cytoplasm. One of several proteins that assist in the late maturation steps of the functional core of the 30S ribosomal subunit. Associates with free 30S ribosomal subunits (but not with 30S subunits that are part of 70S ribosomes or polysomes). Required for efficient processing of 16S rRNA. May interact with the 5'-terminal helix region of 16S rRNA. In Fervidobacterium nodosum (strain ATCC 35602 / DSM 5306 / Rt17-B1), this protein is Ribosome-binding factor A.